The following is a 157-amino-acid chain: Regulator of Ty1 transposition protein 102 (157 aa).

Ser77 is subject to Phosphoserine. The disordered stretch occupies residues 95–157; sequence SLMTSHTKGD…TKESKDVKMN (63 aa). A compositionally biased stretch (polar residues) spans 96 to 116; that stretch reads LMTSHTKGDTSKATGAPSANQ. Position 122 is a phosphoserine (Ser122). A compositionally biased stretch (basic and acidic residues) spans 147–157; sequence NTKESKDVKMN.

Interacts with STH1 and SWI3. Component of the two forms of the RSC complex composed of at least either RSC1 or RSC2, and ARP7, ARP9, LDB7, NPL6, RSC3, RSC30, RSC4, RSC58, RSC6, RSC8, RSC9, SFH1, STH1, HTL1 and probably RTT102. The complexes interact with histone and histone variant components of centromeric chromatin. Probable additional component of the SWI/SNF global transcription activator complex. The 1.14 MDa SWI/SNF complex is composed of 11 different subunits: one copy each of SWI1, SNF2/SWI2, SNF5, SNF12/SWP73, ARP7/SWP61, ARP9/SWP59; two copies each of SWI3, SNF6, SNF11, SWP82; and three copies of TAF14/SWP29.

Its subcellular location is the nucleus. Its function is as follows. Probable component of the chromatin structure-remodeling complex (RSC) which is involved in transcription regulation and nucleosome positioning. RSC is responsible for the transfer of a histone octamer from a nucleosome core particle to naked DNA. The reaction requires ATP and involves an activated RSC-nucleosome intermediate. Remodeling reaction also involves DNA translocation, DNA twist and conformational change. As a reconfigurer of centromeric and flanking nucleosomes, RSC complex is required both for proper kinetochore function in chromosome segregation and, via a PKC1-dependent signaling pathway, for organization of the cellular cytoskeleton. Probable component of the SWI/SNF complex, an ATP-dependent chromatin-remodeling complex, is required for the positive and negative regulation of gene expression of a large number of genes. It changes chromatin structure by altering DNA-histone contacts within a nucleosome, leading eventually to a change in nucleosome position, thus facilitating or repressing binding of gene-specific transcription factors. This chain is Regulator of Ty1 transposition protein 102 (RTT102), found in Saccharomyces cerevisiae (strain ATCC 204508 / S288c) (Baker's yeast).